Here is a 364-residue protein sequence, read N- to C-terminus: Selenide, water dikinase (364 aa).

The active site involves selenocysteine 25. A non-standard amino acid (selenocysteine) is located at residue selenocysteine 25. Residues lysine 28, 46–48, aspartate 66, aspartate 89, and 141–143 contribute to the ATP site; these read GYD and GQT. Aspartate 48 contributes to the Mg(2+) binding site. Aspartate 89 lines the Mg(2+) pocket. A Mg(2+)-binding site is contributed by aspartate 244.

This sequence belongs to the selenophosphate synthase 1 family. Class II subfamily. As to quaternary structure, homodimer. Mg(2+) serves as cofactor.

It catalyses the reaction hydrogenselenide + ATP + H2O = selenophosphate + AMP + phosphate + 2 H(+). Its function is as follows. Synthesizes selenophosphate from selenide and ATP. The protein is Selenide, water dikinase (selD) of Dictyostelium discoideum (Social amoeba).